We begin with the raw amino-acid sequence, 308 residues long: Ornithine carbamoyltransferase (308 aa).

Carbamoyl phosphate-binding positions include 55–58 (STRT), Q82, R106, and 133–136 (HPCQ). L-ornithine-binding positions include N164, D227, and 231-232 (SM). Residues 267–268 (CL) and R295 contribute to the carbamoyl phosphate site.

Belongs to the aspartate/ornithine carbamoyltransferase superfamily. OTCase family.

Its subcellular location is the cytoplasm. The catalysed reaction is carbamoyl phosphate + L-ornithine = L-citrulline + phosphate + H(+). Its pathway is amino-acid biosynthesis; L-arginine biosynthesis; L-arginine from L-ornithine and carbamoyl phosphate: step 1/3. Reversibly catalyzes the transfer of the carbamoyl group from carbamoyl phosphate (CP) to the N(epsilon) atom of ornithine (ORN) to produce L-citrulline. The protein is Ornithine carbamoyltransferase of Prochlorococcus marinus subsp. pastoris (strain CCMP1986 / NIES-2087 / MED4).